The following is a 90-amino-acid chain: Small ribosomal subunit protein uS15 (90 aa).

This sequence belongs to the universal ribosomal protein uS15 family. In terms of assembly, part of the 30S ribosomal subunit. Forms a bridge to the 50S subunit in the 70S ribosome, contacting the 23S rRNA.

In terms of biological role, one of the primary rRNA binding proteins, it binds directly to 16S rRNA where it helps nucleate assembly of the platform of the 30S subunit by binding and bridging several RNA helices of the 16S rRNA. Functionally, forms an intersubunit bridge (bridge B4) with the 23S rRNA of the 50S subunit in the ribosome. This is Small ribosomal subunit protein uS15 from Helicobacter pylori (strain J99 / ATCC 700824) (Campylobacter pylori J99).